A 341-amino-acid chain; its full sequence is UDP-3-O-(3-hydroxymyristoyl)glucosamine N-acyltransferase (341 aa).

The Proton acceptor role is filled by His239.

It belongs to the transferase hexapeptide repeat family. LpxD subfamily. In terms of assembly, homotrimer.

The enzyme catalyses a UDP-3-O-[(3R)-3-hydroxyacyl]-alpha-D-glucosamine + a (3R)-hydroxyacyl-[ACP] = a UDP-2-N,3-O-bis[(3R)-3-hydroxyacyl]-alpha-D-glucosamine + holo-[ACP] + H(+). It catalyses the reaction UDP-3-O-[(3R)-3-hydroxytetradecanoyl]-alpha-D-glucosamine + (3R)-hydroxytetradecanoyl-[ACP] = UDP-2-N,3-O-bis[(3R)-3-hydroxytetradecanoyl]-alpha-D-glucosamine + holo-[ACP] + H(+). It functions in the pathway glycolipid biosynthesis; lipid IV(A) biosynthesis; lipid IV(A) from (3R)-3-hydroxytetradecanoyl-[acyl-carrier-protein] and UDP-N-acetyl-alpha-D-glucosamine: step 3/6. Functionally, catalyzes the N-acylation of UDP-3-O-(hydroxytetradecanoyl)glucosamine using 3-hydroxytetradecanoyl-ACP as the acyl donor. Is involved in the biosynthesis of lipid A, a phosphorylated glycolipid that anchors the lipopolysaccharide to the outer membrane of the cell. This is UDP-3-O-(3-hydroxymyristoyl)glucosamine N-acyltransferase from Escherichia coli (strain UTI89 / UPEC).